Reading from the N-terminus, the 317-residue chain is Adenine deaminase (317 aa).

3 residues coordinate Zn(2+): His14, His16, and His194. Glu197 (proton donor) is an active-site residue. Position 275 (Asp275) interacts with Zn(2+). Substrate is bound at residue Asp276.

It belongs to the metallo-dependent hydrolases superfamily. Adenosine and AMP deaminases family. Adenine deaminase type 2 subfamily. Zn(2+) is required as a cofactor.

The catalysed reaction is adenine + H2O + H(+) = hypoxanthine + NH4(+). Its function is as follows. Catalyzes the hydrolytic deamination of adenine to hypoxanthine. Plays an important role in the purine salvage pathway and in nitrogen catabolism. The chain is Adenine deaminase from Pseudomonas syringae pv. syringae (strain B728a).